The sequence spans 533 residues: MTKFIFVTGGVVSGLGKGITSASIGMLFKARGFRTTNIKIDPYLNYDAGTMNPYQHGEVFVLDDGGEVDLDLGNYERFLDTSLSFDHNITTGKVYSAVIEKERKGEYLGATVQVIPHITNEIKERIRRIARDYDVVVVEIGGTVGDIESMPFLEAARQMQIEEGRENVAFVHVTYVPRLRVVGEQKTKPTQHSVKELRSLGIQPDAIVARSEDPLEDSARRKISLFTNVPEEAVISAYDVEDTYEVPLMLEKEGLPAYLARRLGLPEREPDLEAWREMVEKYKSLTDTVEIAIVGKYVKLADSYLSIKEALKHSSVANDVKVKIRWIEAEDVERQGVKLLEGVDGIIVPGGFGARGTEGKMMAIRYARENNIPFLGICFGFQLTVVEFARNVLGLEGAHSTEIDPQTPYPVVDLMPEQRDLDRLGGTMRLGAYPVHIKPNTLARRLYGREIVYERHRHRWEVNPDYVEKFEEAGLVFSGIAGDDERRMEILELPGHSYFIATQFHPEFKSRPMRPAPVFRGLVEAAKKKKYGS.

The segment at 1–265 (MTKFIFVTGG…PAYLARRLGL (265 aa)) is amidoligase domain. Residue Ser13 participates in CTP binding. Residue Ser13 participates in UTP binding. Position 14–19 (14–19 (GLGKGI)) interacts with ATP. Tyr54 provides a ligand contact to L-glutamine. Asp71 provides a ligand contact to ATP. Mg(2+)-binding residues include Asp71 and Glu139. CTP contacts are provided by residues 146–148 (DIE), 186–191 (KTKPTQ), and Lys222. Residues 186 to 191 (KTKPTQ) and Lys222 contribute to the UTP site. The region spanning 290-532 (EIAIVGKYVK…VEAAKKKKYG (243 aa)) is the Glutamine amidotransferase type-1 domain. Gly351 provides a ligand contact to L-glutamine. The active-site Nucleophile; for glutamine hydrolysis is Cys378. L-glutamine-binding positions include 379–382 (FGFQ), Glu402, and Arg459. Active-site residues include His505 and Glu507.

Belongs to the CTP synthase family. Homotetramer.

The enzyme catalyses UTP + L-glutamine + ATP + H2O = CTP + L-glutamate + ADP + phosphate + 2 H(+). It carries out the reaction L-glutamine + H2O = L-glutamate + NH4(+). The catalysed reaction is UTP + NH4(+) + ATP = CTP + ADP + phosphate + 2 H(+). It functions in the pathway pyrimidine metabolism; CTP biosynthesis via de novo pathway; CTP from UDP: step 2/2. Its activity is regulated as follows. Allosterically activated by GTP, when glutamine is the substrate; GTP has no effect on the reaction when ammonia is the substrate. The allosteric effector GTP functions by stabilizing the protein conformation that binds the tetrahedral intermediate(s) formed during glutamine hydrolysis. Inhibited by the product CTP, via allosteric rather than competitive inhibition. Catalyzes the ATP-dependent amination of UTP to CTP with either L-glutamine or ammonia as the source of nitrogen. Regulates intracellular CTP levels through interactions with the four ribonucleotide triphosphates. This is CTP synthase from Thermococcus kodakarensis (strain ATCC BAA-918 / JCM 12380 / KOD1) (Pyrococcus kodakaraensis (strain KOD1)).